We begin with the raw amino-acid sequence, 351 residues long: Phosphate acyltransferase (351 aa).

It belongs to the PlsX family. As to quaternary structure, homodimer. Probably interacts with PlsY.

It is found in the cytoplasm. It catalyses the reaction a fatty acyl-[ACP] + phosphate = an acyl phosphate + holo-[ACP]. The protein operates within lipid metabolism; phospholipid metabolism. In terms of biological role, catalyzes the reversible formation of acyl-phosphate (acyl-PO(4)) from acyl-[acyl-carrier-protein] (acyl-ACP). This enzyme utilizes acyl-ACP as fatty acyl donor, but not acyl-CoA. The protein is Phosphate acyltransferase of Neisseria meningitidis serogroup C / serotype 2a (strain ATCC 700532 / DSM 15464 / FAM18).